The sequence spans 248 residues: Small ribosomal subunit protein uS3 (248 aa).

Positions 38-106 constitute a KH type-2 domain; the sequence is VREYLVKTLD…QVALNILEVK (69 aa). Residues 213 to 230 show a composition bias toward basic and acidic residues; the sequence is ESEINAPAERRGRGDRNG. Positions 213–248 are disordered; sequence ESEINAPAERRGRGDRNGRPRRGGQRRQRSEQKQEG.

Belongs to the universal ribosomal protein uS3 family. As to quaternary structure, part of the 30S ribosomal subunit. Forms a tight complex with proteins S10 and S14.

In terms of biological role, binds the lower part of the 30S subunit head. Binds mRNA in the 70S ribosome, positioning it for translation. This chain is Small ribosomal subunit protein uS3, found in Corynebacterium diphtheriae (strain ATCC 700971 / NCTC 13129 / Biotype gravis).